Reading from the N-terminus, the 519-residue chain is Ribose import ATP-binding protein RbsA 2 (519 aa).

ABC transporter domains follow at residues 15–252 and 262–506; these read FRLR…VGRP and HEPG…TGVR. An ATP-binding site is contributed by 47 to 54; that stretch reads GENGAGKS.

It belongs to the ABC transporter superfamily. Ribose importer (TC 3.A.1.2.1) family. The complex is composed of an ATP-binding protein (RbsA), two transmembrane proteins (RbsC) and a solute-binding protein (RbsB).

The protein resides in the cell membrane. It catalyses the reaction D-ribose(out) + ATP + H2O = D-ribose(in) + ADP + phosphate + H(+). Functionally, part of the ABC transporter complex RbsABC involved in ribose import. Responsible for energy coupling to the transport system. In Rubrobacter xylanophilus (strain DSM 9941 / JCM 11954 / NBRC 16129 / PRD-1), this protein is Ribose import ATP-binding protein RbsA 2.